The sequence spans 181 residues: Large ribosomal subunit protein uL5 (181 aa).

The protein belongs to the universal ribosomal protein uL5 family. Part of the 50S ribosomal subunit; contacts the 5S rRNA and probably tRNA. Forms a bridge to the 30S subunit in the 70S ribosome.

Its function is as follows. This is one of the proteins that bind and probably mediate the attachment of the 5S RNA into the large ribosomal subunit, where it forms part of the central protuberance. In the 70S ribosome it contacts protein S13 of the 30S subunit (bridge B1b), connecting the 2 subunits; this bridge is implicated in subunit movement. May contact the P site tRNA; the 5S rRNA and some of its associated proteins might help stabilize positioning of ribosome-bound tRNAs. In Methanococcus maripaludis (strain C6 / ATCC BAA-1332), this protein is Large ribosomal subunit protein uL5.